Reading from the N-terminus, the 622-residue chain is Probable potassium transport system protein Kup (622 aa).

A run of 12 helical transmembrane segments spans residues 8-28 (LAAL…TSVL), 50-70 (VLSV…VVLV), 100-120 (GWLL…GVIT), 137-157 (PHFG…LFAV), 169-189 (FGPV…PHIV), 203-223 (ALGF…AVVL), 247-267 (WFSV…ALLL), 285-305 (ALVP…QALI), 337-357 (IYLP…VVMF), 366-386 (AYGI…FFVI), 392-412 (YPLA…LAFF), and 419-439 (LLQG…LMMT).

The protein belongs to the HAK/KUP transporter (TC 2.A.72) family.

It localises to the cell inner membrane. The enzyme catalyses K(+)(in) + H(+)(in) = K(+)(out) + H(+)(out). In terms of biological role, transport of potassium into the cell. Likely operates as a K(+):H(+) symporter. This chain is Probable potassium transport system protein Kup, found in Acidovorax ebreus (strain TPSY) (Diaphorobacter sp. (strain TPSY)).